Reading from the N-terminus, the 420-residue chain is Coiled-coil domain-containing protein 85C (420 aa).

The residue at position 2 (Ala-2) is an N-acetylalanine. 2 coiled-coil regions span residues 26–92 (ELLR…RELC) and 122–165 (HEVA…LAAA). A disordered region spans residues 165-271 (AGGAGGGGGG…NGLHDPSSTY (107 aa)). The span at 166–176 (GGAGGGGGGAG) shows a compositional bias: gly residues. Phosphoserine is present on Ser-179. Residues 185-212 (ASLSGPLAGSAAGSGARDVGDGSSTSSA) show a composition bias toward low complexity. Ser-247 is subject to Phosphoserine.

Belongs to the CCDC85 family. In terms of assembly, may interact with ARVCF, CTNND1, CTNND2 and PKP4. As to expression, predominantly expressed on the surface of the lateral ventricular walls of the developing cerebral cortex.

It localises to the cell junction. The protein localises to the tight junction. It is found in the adherens junction. Functionally, may play a role in cell-cell adhesion and epithelium development through its interaction with proteins of the beta-catenin family. May play an important role in cortical development, especially in the maintenance of radial glia. The protein is Coiled-coil domain-containing protein 85C (Ccdc85c) of Mus musculus (Mouse).